The following is a 285-amino-acid chain: Nucleotide-binding protein PSPPH_4154 (285 aa).

8 to 15 contacts ATP; sequence GRSGSGKS. 60-63 serves as a coordination point for GTP; the sequence is DARN.

Belongs to the RapZ-like family.

Displays ATPase and GTPase activities. This Pseudomonas savastanoi pv. phaseolicola (strain 1448A / Race 6) (Pseudomonas syringae pv. phaseolicola (strain 1448A / Race 6)) protein is Nucleotide-binding protein PSPPH_4154.